Here is a 78-residue protein sequence, read N- to C-terminus: Neurogranin (78 aa).

Met1 bears the N-acetylmethionine mark. A disulfide bridge connects residues Cys3 and Cys51. An IQ domain is found at 26–47 (ANAAAAKIQASFRGHMARKKIK). A Phosphoserine; by PHK and PKC modification is found at Ser36. The disordered stretch occupies residues 39-78 (GHMARKKIKSGECGRKGPGPGGPGGAGGARGGAGGGPSGD). The Collagen-like domain maps to 48-78 (SGECGRKGPGPGGPGGAGGARGGAGGGPSGD). The span at 54 to 78 (KGPGPGGPGGAGGARGGAGGGPSGD) shows a compositional bias: gly residues. A Citrulline; partial modification is found at Arg68. Arg68 is subject to Omega-N-methylarginine.

Belongs to the neurogranin family. In terms of assembly, interacts with apo-calmodulin; this interaction decreases the affinity of calmodulin for calcium ions. Disulfide bond formation is redox-sensitive. The cysteine residues are readily oxidized by several nitric acid (NO) donors and other oxidants to form intramolecular disulfide. Cys-51 can form a disulfide with any other of the cysteine residues with an order of reactivity Cys-9 &gt; Cys-4 &gt; Cys-3. Post-translationally, phosphorylated at Ser-36 by PHK and PKC, phosphorylation prevents interaction with Calmodulin and interrupts several learning- and memory-associated functions.

It localises to the cytoplasm. Its subcellular location is the synapse. The protein resides in the cell projection. It is found in the dendritic spine. Its function is as follows. Regulates the affinity of calmodulin for calcium. Involved in synaptic plasticity and spatial learning. This Mus musculus (Mouse) protein is Neurogranin (Nrgn).